A 597-amino-acid polypeptide reads, in one-letter code: Elongation factor 4 (597 aa).

A tr-type G domain is found at lysine 2–glutamate 184. GTP contacts are provided by residues aspartate 14–threonine 19 and asparagine 131–aspartate 134.

Belongs to the TRAFAC class translation factor GTPase superfamily. Classic translation factor GTPase family. LepA subfamily.

The protein resides in the cell inner membrane. It catalyses the reaction GTP + H2O = GDP + phosphate + H(+). In terms of biological role, required for accurate and efficient protein synthesis under certain stress conditions. May act as a fidelity factor of the translation reaction, by catalyzing a one-codon backward translocation of tRNAs on improperly translocated ribosomes. Back-translocation proceeds from a post-translocation (POST) complex to a pre-translocation (PRE) complex, thus giving elongation factor G a second chance to translocate the tRNAs correctly. Binds to ribosomes in a GTP-dependent manner. This Aliivibrio salmonicida (strain LFI1238) (Vibrio salmonicida (strain LFI1238)) protein is Elongation factor 4.